Consider the following 195-residue polypeptide: Adenylate kinase (195 aa).

ATP is bound at residue 10 to 15; sequence GSGKGT. The tract at residues 30–59 is NMP; that stretch reads STGDILRAERAAGTLLGQQAQSYMDRGELV. Residues threonine 31, arginine 36, 57–59, 85–88, and glutamine 92 contribute to the AMP site; these read ELV and GFPR. An LID region spans residues 126–140; sequence NRAKQAVNGQQRSDD. Arginine 127 is a binding site for ATP. Residues arginine 137 and arginine 148 each contribute to the AMP site. Arginine 176 contacts ATP.

This sequence belongs to the adenylate kinase family. In terms of assembly, monomer.

It is found in the cytoplasm. It catalyses the reaction AMP + ATP = 2 ADP. The protein operates within purine metabolism; AMP biosynthesis via salvage pathway; AMP from ADP: step 1/1. In terms of biological role, catalyzes the reversible transfer of the terminal phosphate group between ATP and AMP. Plays an important role in cellular energy homeostasis and in adenine nucleotide metabolism. The sequence is that of Adenylate kinase from Thermosynechococcus vestitus (strain NIES-2133 / IAM M-273 / BP-1).